Reading from the N-terminus, the 358-residue chain is F-box only protein 25 (358 aa).

The segment at 1–83 is interaction with beta-actin; it reads MPFLGQDWRS…NDTNTQSFYR (83 aa). One can recognise an F-box domain in the interval 226 to 274; the sequence is LTLSDLPLHMLNNILYRFSDGWDIITLGQVTPTLYMLSEDRQLWKKLCQ.

Part of a SCF (SKP1-cullin-F-box) protein ligase complex consisting of FBXO25, SKP1, CUL1 and RBX1. Interacts directly with SKP1 and CUL1. Interacts (via C-terminus) with beta-actin (via N-terminus).

It is found in the nucleus. The protein operates within protein modification; protein ubiquitination. Substrate-recognition component of the SCF (SKP1-CUL1-F-box protein)-type E3 ubiquitin ligase complex. May play a role in accumulation of expanded polyglutamine (polyQ) protein huntingtin (HTT). This is F-box only protein 25 (FBXO25) from Macaca fascicularis (Crab-eating macaque).